Consider the following 281-residue polypeptide: Nuclear receptor-interacting protein 2 (281 aa).

A disordered region spans residues 18-85; sequence ESCSTGQRQA…RAHLSQQRRL (68 aa). The span at 36-47 shows a compositional bias: pro residues; sequence TPPPSSPWPTPP. Basic and acidic residues predominate over residues 55–78; sequence QEARRDEGEARTRGQEAQLRDRAH. Positions 244–248 match the LXXLL motif motif; sequence LQTLL.

In terms of assembly, interacts with NR1F2, RARA and THRB in a ligand-dependent manner.

It localises to the nucleus. In terms of biological role, down-regulates transcriptional activation by nuclear receptors such as NR1F2. In Homo sapiens (Human), this protein is Nuclear receptor-interacting protein 2 (NRIP2).